Consider the following 143-residue polypeptide: Nucleoside diphosphate kinase (143 aa).

ATP is bound by residues Lys-11, Phe-59, Arg-87, Thr-93, Arg-104, and Asn-114. His-117 (pros-phosphohistidine intermediate) is an active-site residue.

Belongs to the NDK family. As to quaternary structure, homotetramer. It depends on Mg(2+) as a cofactor.

The protein resides in the cytoplasm. The catalysed reaction is a 2'-deoxyribonucleoside 5'-diphosphate + ATP = a 2'-deoxyribonucleoside 5'-triphosphate + ADP. It catalyses the reaction a ribonucleoside 5'-diphosphate + ATP = a ribonucleoside 5'-triphosphate + ADP. In terms of biological role, major role in the synthesis of nucleoside triphosphates other than ATP. The ATP gamma phosphate is transferred to the NDP beta phosphate via a ping-pong mechanism, using a phosphorylated active-site intermediate. This chain is Nucleoside diphosphate kinase, found in Erwinia tasmaniensis (strain DSM 17950 / CFBP 7177 / CIP 109463 / NCPPB 4357 / Et1/99).